We begin with the raw amino-acid sequence, 110 residues long: Phosphoribosyl-ATP pyrophosphatase (110 aa).

The protein belongs to the PRA-PH family.

It localises to the cytoplasm. It carries out the reaction 1-(5-phospho-beta-D-ribosyl)-ATP + H2O = 1-(5-phospho-beta-D-ribosyl)-5'-AMP + diphosphate + H(+). The protein operates within amino-acid biosynthesis; L-histidine biosynthesis; L-histidine from 5-phospho-alpha-D-ribose 1-diphosphate: step 2/9. In Clostridium botulinum (strain Kyoto / Type A2), this protein is Phosphoribosyl-ATP pyrophosphatase.